The sequence spans 517 residues: 2-isopropylmalate synthase (517 aa).

The Pyruvate carboxyltransferase domain maps to 7 to 269 (VIIFDTTLRD…ETGIDTTQIV (263 aa)). Residues Asp-16, His-204, His-206, and Asn-240 each coordinate Mn(2+). Positions 395-517 (KFISQKISTE…KPKAQGSGTI (123 aa)) are regulatory domain.

It belongs to the alpha-IPM synthase/homocitrate synthase family. LeuA type 1 subfamily. In terms of assembly, homodimer. It depends on Mn(2+) as a cofactor.

Its subcellular location is the cytoplasm. The catalysed reaction is 3-methyl-2-oxobutanoate + acetyl-CoA + H2O = (2S)-2-isopropylmalate + CoA + H(+). It functions in the pathway amino-acid biosynthesis; L-leucine biosynthesis; L-leucine from 3-methyl-2-oxobutanoate: step 1/4. Catalyzes the condensation of the acetyl group of acetyl-CoA with 3-methyl-2-oxobutanoate (2-ketoisovalerate) to form 3-carboxy-3-hydroxy-4-methylpentanoate (2-isopropylmalate). The sequence is that of 2-isopropylmalate synthase from Neisseria meningitidis serogroup A / serotype 4A (strain DSM 15465 / Z2491).